The primary structure comprises 24 residues: Small ribosomal subunit protein uS5 (24 aa).

The protein belongs to the universal ribosomal protein uS5 family. In terms of assembly, part of the 30S ribosomal subunit. Contacts proteins S4 and S8.

In terms of biological role, with S4 and S12 plays an important role in translational accuracy. Located at the back of the 30S subunit body where it stabilizes the conformation of the head with respect to the body. The sequence is that of Small ribosomal subunit protein uS5 (rpsE) from Vibrio proteolyticus (Aeromonas proteolytica).